Consider the following 532-residue polypeptide: MAFSVEEISSILPNSLSANPRNVSQNTISPSFFKPSLKPYASKTLISLSCRRSLSPVFSAGTYVTNVDEDDKLHEECGVVGIHGDPEASRLSYLALHALQHRGQEGAGIVAANQNGLESITGVGLVSDVFTESKLNNLPGDIAIGHVRYSTSGASMLKNVQPFIASCKLGSLAVAHNGNFVNYKQLKTKLEEMGSIFITSSDTELVLHLIAKSKAKTFLLRVIDACEKLRGAYSMVFVFEDKLIAVRDPFGFRPLVMGRRSNGAVVFASETCALDLIDATYEREVCPGEIVVVDRNHGDSSMFMISHPEQKQCVFEHGYFSQPNSIVFGRSVYETRRMYGEILATVAPVDCDVVIAVPDSGTVAALGYAAKAGVPFQIGLLRSHYAKRTFIEPTQEIRDFAVKVKLSPVRAVLEGKRVVVVDDSIVRGTTSLKIVRMLRDAGAKEVHMRIALPPMIASCYYGVDTPRSQELISSKMSVEAIQKHINCDSLAFLPLDSLKGVYGPVESHRYCYACFTGKYPVTKTESEEADAS.

A chloroplast-targeting transit peptide spans 1 to 59; it reads MAFSVEEISSILPNSLSANPRNVSQNTISPSFFKPSLKPYASKTLISLSCRRSLSPVFS. Cys-77 serves as the catalytic Nucleophile. A Glutamine amidotransferase type-2 domain is found at 77-296; that stretch reads CGVVGIHGDP…PGEIVVVDRN (220 aa). Cys-313, Cys-459, Cys-511, and Cys-514 together coordinate [4Fe-4S] cluster.

This sequence in the C-terminal section; belongs to the purine/pyrimidine phosphoribosyltransferase family. [4Fe-4S] cluster is required as a cofactor. Mg(2+) serves as cofactor. In terms of tissue distribution, mostly expressed at low levels in leaves, and, to a lower extent, in cotyledons.

The protein localises to the plastid. The protein resides in the chloroplast stroma. It catalyses the reaction 5-phospho-beta-D-ribosylamine + L-glutamate + diphosphate = 5-phospho-alpha-D-ribose 1-diphosphate + L-glutamine + H2O. The protein operates within purine metabolism; IMP biosynthesis via de novo pathway; N(1)-(5-phospho-D-ribosyl)glycinamide from 5-phospho-alpha-D-ribose 1-diphosphate: step 1/2. Inhibited by the phenyltriazole acetic acid compound [5-(4-chlorophenyl)-1-isopropyl-1H-[1,2,4]triazol-3-yl]-acetic acid (DAS734), a bleaching herbicide. Repressed by AMP, ADP, ATP and GTP, and slightly by GMP. Functionally, catalyzes the first committed step of 'de novo' purine biosynthesis from glutamine. This Arabidopsis thaliana (Mouse-ear cress) protein is Amidophosphoribosyltransferase 3, chloroplastic (ASE3).